The primary structure comprises 402 residues: Bacillibactin exporter (402 aa).

11 helical membrane passes run 4–24 (IIALSSVPLVMTLGNSMLIPV), 39–59 (VSLIITVYSVVAIICIPIAGY), 69–89 (ILLPCLLIAGLGGAVAAFAST), 104–124 (LQGIGSAGAAPIVMPFIGDLF), 162–182 (FVPFWFIPFFCLISFLLVLFL), 212–232 (WLYTVFIIGCVIMFLLFGVLF), 247–267 (VAKGGLLAIPLLFLSTSSFIA), 278–298 (MKFCVVTGMILLTLSFIALWW), 302–322 (FYFLFVFLSFGGIGIGMALPA), 342–362 (FYNSMRFIGVALGPPVFAALM), and 368–388 (IIFILSAFCSIVSLFLVLFTV).

This sequence belongs to the major facilitator superfamily.

It localises to the cell membrane. Its function is as follows. Involved in secretion of bacillibactin. This is Bacillibactin exporter (ymfD) from Bacillus subtilis (strain 168).